A 616-amino-acid polypeptide reads, in one-letter code: Protein phosphatase EYA4 (616 aa).

Met1 carries the post-translational modification N-acetylmethionine. Disordered stretches follow at residues 1-66, 186-211, and 277-345; these read MEDT…VTTN, SQTQSPLQSGCLSYSPGFSTPQPGQT, and ADGT…DSDL. Residues Lys14 and Lys52 each participate in a glycyl lysine isopeptide (Lys-Gly) (interchain with G-Cter in SUMO2) cross-link. The segment covering 56–66 has biased composition (low complexity); the sequence is SGLSSTSVTTN. The segment covering 277–311 has biased composition (polar residues); the sequence is ADGTSSSTSTYQLQESLQGLTSQPGEFDTVQSPST. Ser338 is modified (phosphoserine). Asp352 acts as the Nucleophile in catalysis. Positions 352, 354, and 580 each coordinate Mg(2+). Asp354 acts as the Proton donor in catalysis.

Belongs to the HAD-like hydrolase superfamily. EYA family. In terms of assembly, interacts with SIX3; translocates EYA4 from the cytoplasm to the nucleus and promotes activation of their target genes. Requires Mg(2+) as cofactor. As to expression, in the embryo, expressed mainly in the craniofacial mesenchyme, dermamyotome and limb.

The protein localises to the cytoplasm. The protein resides in the nucleus. It catalyses the reaction O-phospho-L-tyrosyl-[protein] + H2O = L-tyrosyl-[protein] + phosphate. Functionally, tyrosine phosphatase that specifically dephosphorylates 'Tyr-142' of histone H2AX (H2AXY142ph). 'Tyr-142' phosphorylation of histone H2AX plays a central role in DNA repair and acts as a mark that distinguishes between apoptotic and repair responses to genotoxic stress. Promotes efficient DNA repair by dephosphorylating H2AX, promoting the recruitment of DNA repair complexes containing MDC1. Its function as histone phosphatase probably explains its role in transcription regulation during organogenesis. May be involved in development of the eye. The sequence is that of Protein phosphatase EYA4 (Eya4) from Mus musculus (Mouse).